The primary structure comprises 369 residues: UDP-glucose 4-epimerase 4 (369 aa).

19 to 50 (TVLVTGGAGYIGSHTVLQLLAAGFRVVVADSL) is a binding site for NAD(+). A substrate-binding site is contributed by Ser144. Residue Tyr168 is the Proton acceptor of the active site.

Belongs to the NAD(P)-dependent epimerase/dehydratase family. It depends on NAD(+) as a cofactor.

It catalyses the reaction UDP-alpha-D-glucose = UDP-alpha-D-galactose. It participates in carbohydrate metabolism; galactose metabolism. Functionally, catalyzes the interconversion between UDP-glucose and UDP-galactose. The protein is UDP-glucose 4-epimerase 4 (UGE-4) of Oryza sativa subsp. japonica (Rice).